Consider the following 417-residue polypeptide: 3-ketoacyl-CoA thiolase, peroxisomal (417 aa).

Residues 1 to 15 (MSQRLQSIKDHLVES) constitute a peroxisome transit peptide. The tract at residues 1 to 15 (MSQRLQSIKDHLVES) is PTS2-type peroxisomal targeting signal. Cysteine 125 (acyl-thioester intermediate) is an active-site residue. Active-site proton acceptor residues include histidine 375 and cysteine 403.

Belongs to the thiolase-like superfamily. Thiolase family. In terms of assembly, homodimer. Interacts (via PTS2-type peroxisomal targeting signal region) with PEX7; leading to its translocation into peroxisomes.

The protein resides in the peroxisome. It localises to the mitochondrion intermembrane space. It carries out the reaction an acyl-CoA + acetyl-CoA = a 3-oxoacyl-CoA + CoA. It participates in lipid metabolism; fatty acid metabolism. Its function is as follows. Responsible for the thiolytic cleavage of straight chain 3-keto fatty acyl-CoAs (3-oxoacyl-CoAs). This is 3-ketoacyl-CoA thiolase, peroxisomal (POT1) from Saccharomyces cerevisiae (strain ATCC 204508 / S288c) (Baker's yeast).